We begin with the raw amino-acid sequence, 300 residues long: Large ribosomal subunit protein bL9m (300 aa).

The protein belongs to the bacterial ribosomal protein bL9 family. In terms of assembly, component of the mitochondrial large ribosomal subunit (mt-LSU). Mature N.crassa 74S mitochondrial ribosomes consist of a small (37S) and a large (54S) subunit. The 37S small subunit contains a 16S ribosomal RNA (16S mt-rRNA) and 32 different proteins. The 54S large subunit contains a 23S rRNA (23S mt-rRNA) and 42 different proteins.

It localises to the mitochondrion. Component of the mitochondrial ribosome (mitoribosome), a dedicated translation machinery responsible for the synthesis of mitochondrial genome-encoded proteins, including at least some of the essential transmembrane subunits of the mitochondrial respiratory chain. The mitoribosomes are attached to the mitochondrial inner membrane and translation products are cotranslationally integrated into the membrane. The protein is Large ribosomal subunit protein bL9m (mrpl50) of Neurospora crassa (strain ATCC 24698 / 74-OR23-1A / CBS 708.71 / DSM 1257 / FGSC 987).